Here is a 413-residue protein sequence, read N- to C-terminus: Eukaryotic initiation factor 4A-10 (413 aa).

The short motif at 40-68 (DSFDAMGLQENLLRGIYAYGFEKPSAIQQ) is the Q motif element. The Helicase ATP-binding domain occupies 71 to 241 (IVPFCKGLDV…RKFMNKPVRI (171 aa)). 84–91 (AQSGTGKT) contributes to the ATP binding site. The short motif at 189–192 (DEAD) is the DEAD box element. A Helicase C-terminal domain is found at 252–413 (GIKQFYVNVD…ELPANVADLL (162 aa)).

The protein belongs to the DEAD box helicase family. eIF4A subfamily. In terms of assembly, eIF4F is a multi-subunit complex, the composition of which varies with external and internal environmental conditions. It is composed of at least EIF4A, EIF4E and EIF4G.

It catalyses the reaction ATP + H2O = ADP + phosphate + H(+). In terms of biological role, ATP-dependent RNA helicase which is a subunit of the eIF4F complex involved in cap recognition and is required for mRNA binding to ribosome. In the current model of translation initiation, eIF4A unwinds RNA secondary structures in the 5'-UTR of mRNAs which is necessary to allow efficient binding of the small ribosomal subunit, and subsequent scanning for the initiator codon. This chain is Eukaryotic initiation factor 4A-10, found in Nicotiana tabacum (Common tobacco).